The sequence spans 849 residues: Cytosolic phospholipase A2 zeta (849 aa).

In terms of domain architecture, C2 spans 27–145 (EKRGPLWRHW…KCGQPHKHTF (119 aa)). D60, D66, D116, D118, and D123 together coordinate Ca(2+). A PLA2c domain is found at 306 to 849 (EMSSGDLDLR…RHQARERAGA (544 aa)). S395 acts as the Nucleophile in catalysis. Residue D680 is the Proton acceptor of the active site.

It depends on Ca(2+) as a cofactor. In terms of tissue distribution, expressed in myocardium (at protein level).

The protein resides in the cytoplasm. It is found in the cytosol. The protein localises to the cell membrane. Its subcellular location is the mitochondrion. The catalysed reaction is a 1,2-diacyl-sn-glycero-3-phosphocholine + H2O = a 1-acyl-sn-glycero-3-phosphocholine + a fatty acid + H(+). It carries out the reaction a 1-O-alkyl-2-acyl-sn-glycero-3-phosphocholine + H2O = a 1-O-alkyl-sn-glycero-3-phosphocholine + a fatty acid + H(+). The enzyme catalyses 1-hexadecanoyl-2-(9Z-octadecenoyl)-sn-glycero-3-phosphocholine + H2O = 2-(9Z-octadecenoyl)-sn-glycero-3-phosphocholine + hexadecanoate + H(+). It catalyses the reaction 1-hexadecanoyl-2-(9Z,12Z-octadecadienoyl)-sn-glycero-3-phosphocholine + H2O = (9Z,12Z)-octadecadienoate + 1-hexadecanoyl-sn-glycero-3-phosphocholine + H(+). The catalysed reaction is 1-hexadecanoyl-2-(5Z,8Z,11Z,14Z-eicosatetraenoyl)-sn-glycero-3-phosphocholine + H2O = 1-hexadecanoyl-sn-glycero-3-phosphocholine + (5Z,8Z,11Z,14Z)-eicosatetraenoate + H(+). It carries out the reaction 1-hexadecanoyl-2-(9Z,12Z-octadecadienoyl)-sn-glycero-3-phosphoethanolamine + H2O = 1-hexadecanoyl-sn-glycero-3-phosphoethanolamine + (9Z,12Z)-octadecadienoate + H(+). The enzyme catalyses 1-hexadecanoyl-2-(5Z,8Z,11Z,14Z-eicosatetraenoyl)-sn-glycero-3-phosphoethanolamine + H2O = 1-hexadecanoyl-sn-glycero-3-phosphoethanolamine + (5Z,8Z,11Z,14Z)-eicosatetraenoate + H(+). It catalyses the reaction 1-(5Z,8Z,11Z,14Z-eicosatetraenoyl)-2-O-hexadecyl-sn-glycero-3-phosphocholine + H2O = 2-O-hexadecyl-sn-glycero-3-phosphocholine + (5Z,8Z,11Z,14Z)-eicosatetraenoate + H(+). The catalysed reaction is 1-O-hexadecyl-2-(5Z,8Z,11Z,14Z)-eicosatetraenoyl-sn-glycero-3-phosphocholine + H2O = 1-O-hexadecyl-sn-glycero-3-phosphocholine + (5Z,8Z,11Z,14Z)-eicosatetraenoate + H(+). It carries out the reaction 1-hexadecanoyl-sn-glycero-3-phosphocholine + H2O = sn-glycerol 3-phosphocholine + hexadecanoate + H(+). With respect to regulation, stimulated by cytosolic Ca(2+). Functionally, has calcium-dependent phospholipase and lysophospholipase activities with a potential role in membrane lipid remodeling and biosynthesis of lipid mediators. Preferentially hydrolyzes the ester bond of the fatty acyl group attached at sn-2 position of phospholipids (phospholipase A2 activity). Selectively hydrolyzes sn-2 arachidonoyl group from membrane phospholipids, providing the precursor for eicosanoid biosynthesis. In myocardial mitochondria, plays a major role in arachidonate release that is metabolically channeled to the formation of cardioprotective eicosanoids, epoxyeicosatrienoates (EETs). This chain is Cytosolic phospholipase A2 zeta (PLA2G4F), found in Homo sapiens (Human).